A 372-amino-acid polypeptide reads, in one-letter code: Caytaxin (372 aa).

The interval 1–58 (MGTTEATLRMENVDVRDEWQDEDLPRPLPEDTGVERLGGAVEDSSSPPSTLNLSGAHR) is disordered. Over residues 11–29 (ENVDVRDEWQDEDLPRPLP) the composition is skewed to basic and acidic residues. Residues 43–53 (DSSSPPSTLNL) are compositionally biased toward polar residues. Ser-54 carries the phosphoserine modification. Positions 115–120 (ELEWED) are required for interaction with KLC1. The 158-residue stretch at 171-328 (IRPYMKVVTH…CVLQYEEQRL (158 aa)) folds into the CRAL-TRIO domain. Residues 190–372 (AIIVFAACFL…ATEDQETSMS (183 aa)) form a mediates interaction with GLS region. The disordered stretch occupies residues 329–372 (RAKRESTRPPQPEFLLPRSEEKPETVEEEDRAAEATEDQETSMS). Positions 354 to 372 (VEEEDRAAEATEDQETSMS) are enriched in acidic residues.

In terms of assembly, interacts with KLC1; may link mitochondria to KLC1 and regulate mitochondria localization into neuron projections. Interacts with GLS; the interaction is direct and may control GLS localization, negatively regulating its activity. Interacts with PIN1 (via WW domain); upon NGF stimulation. The interaction with PIN1 and GLS is competitive. Post-translationally, cleaved by CASP3 and CASP7. The potential C-terminal product released by CASP3 cleavage may inhibit the ERK signaling pathway through MAP2K2. In terms of processing, may be ubiquitinated by STUB1. In terms of tissue distribution, neuronal tissues specific. Strongly expressed in brain. Expressed in virtually all parts of the adult brain, including cortex, cerebellum and olfactory bulbs. Enriched in hippocampus, cerebellar cortex, deep cerebellar nuclei, and pontine nuclei (at protein level).

The protein resides in the cell projection. It is found in the axon. It localises to the dendrite. Its subcellular location is the presynapse. The protein localises to the mitochondrion. The protein resides in the growth cone. It is found in the cytoplasm. Functions in the development of neural tissues, particularly the postnatal maturation of the cerebellar cortex. May play a role in neurotransmission through regulation of glutaminase/GLS, an enzyme responsible for the production in neurons of the glutamate neurotransmitter. Alternatively, may regulate the localization of mitochondria within axons and dendrites. This is Caytaxin (Atcay) from Mus musculus (Mouse).